Reading from the N-terminus, the 149-residue chain is Large ribosomal subunit protein uL15 (149 aa).

Residues lysine 14–leucine 57 are disordered. Composition is skewed to gly residues over residues arginine 21–asparagine 35 and serine 42–glycine 52.

It belongs to the universal ribosomal protein uL15 family. Part of the 50S ribosomal subunit.

Functionally, binds to the 23S rRNA. The chain is Large ribosomal subunit protein uL15 from Oleidesulfovibrio alaskensis (strain ATCC BAA-1058 / DSM 17464 / G20) (Desulfovibrio alaskensis).